The chain runs to 490 residues: ATP synthase subunit beta, chloroplastic (490 aa).

170–177 is a binding site for ATP; sequence GGAGVGKT.

The protein belongs to the ATPase alpha/beta chains family. In terms of assembly, F-type ATPases have 2 components, CF(1) - the catalytic core - and CF(0) - the membrane proton channel. CF(1) has five subunits: alpha(3), beta(3), gamma(1), delta(1), epsilon(1). CF(0) has four main subunits: a(1), b(1), b'(1) and c(9-12).

It is found in the plastid. The protein resides in the chloroplast thylakoid membrane. The catalysed reaction is ATP + H2O + 4 H(+)(in) = ADP + phosphate + 5 H(+)(out). In terms of biological role, produces ATP from ADP in the presence of a proton gradient across the membrane. The catalytic sites are hosted primarily by the beta subunits. This is ATP synthase subunit beta, chloroplastic from Ipomoea quamoclit (Cypress vine).